The primary structure comprises 257 residues: Protein YIPF5 (257 aa).

The Cytoplasmic portion of the chain corresponds to 1–124 (MSGFDNFNTD…KASDGSIMNE (124 aa)). A helical membrane pass occupies residues 125–145 (TDLAGPMVFCLAFGATLLLTG). A topological domain (lumenal) is located at residue Lys-146. A helical transmembrane segment spans residues 147–167 (IQFGYVYGISAIGCLGMYCLL). At 168 to 173 (NLMSMT) the chain is on the cytoplasmic side. A helical transmembrane segment spans residues 174-194 (GVSFGCVASVLGYCLLPMIIL). At 195–196 (SS) the chain is on the lumenal side. The helical transmembrane segment at 197–217 (FGVIFSLQGIMGIILTAAIIG) threads the bilayer. Residues 218-236 (WCSLSASKIFISALAMDGQ) lie on the Cytoplasmic side of the membrane. The helical transmembrane segment at 237-257 (QLLVAYPCALLYGVFALISVF) threads the bilayer.

This sequence belongs to the YIP1 family.

The protein localises to the endoplasmic reticulum membrane. The protein resides in the golgi apparatus. It is found in the cis-Golgi network membrane. Functionally, plays a role in transport between endoplasmic reticulum and Golgi. The protein is Protein YIPF5 (yipf5) of Danio rerio (Zebrafish).